Here is a 137-residue protein sequence, read N- to C-terminus: Peptide methionine sulfoxide reductase MsrB (137 aa).

The MsrB domain maps to 7–129 (AEELKKKLSE…NSASLAFSDE (123 aa)). Residues cysteine 46, cysteine 49, cysteine 95, and cysteine 98 each coordinate Zn(2+). The active-site Nucleophile is cysteine 118.

Belongs to the MsrB Met sulfoxide reductase family. It depends on Zn(2+) as a cofactor.

The catalysed reaction is L-methionyl-[protein] + [thioredoxin]-disulfide + H2O = L-methionyl-(R)-S-oxide-[protein] + [thioredoxin]-dithiol. The protein is Peptide methionine sulfoxide reductase MsrB of Salmonella dublin (strain CT_02021853).